We begin with the raw amino-acid sequence, 142 residues long: Large ribosomal subunit protein uL11 (142 aa).

It belongs to the universal ribosomal protein uL11 family. Part of the ribosomal stalk of the 50S ribosomal subunit. Interacts with L10 and the large rRNA to form the base of the stalk. L10 forms an elongated spine to which L12 dimers bind in a sequential fashion forming a multimeric L10(L12)X complex. In terms of processing, one or more lysine residues are methylated.

Forms part of the ribosomal stalk which helps the ribosome interact with GTP-bound translation factors. The sequence is that of Large ribosomal subunit protein uL11 from Photobacterium profundum (strain SS9).